Consider the following 170-residue polypeptide: Cysteine-rich venom protein VAR4 (170 aa).

A signal peptide spans 1–22 (MILLKLYLTLAAILCQSRGTTS). One can recognise an SCP domain in the interval 41–169 (NKHNDLRRTV…PLKYFLVCQY (129 aa)). Cystine bridges form between C77–C156, C95–C170, and C151–C167.

This sequence belongs to the CRISP family. Contains 8 disulfide bonds. In terms of tissue distribution, expressed by the venom gland.

It localises to the secreted. Functionally, blocks ryanodine receptors, and potassium channels. The chain is Cysteine-rich venom protein VAR4 from Varanus acanthurus (Ridge-tailed monitor).